Reading from the N-terminus, the 420-residue chain is Histidine--tRNA ligase (420 aa).

Belongs to the class-II aminoacyl-tRNA synthetase family. In terms of assembly, homodimer.

It is found in the cytoplasm. It catalyses the reaction tRNA(His) + L-histidine + ATP = L-histidyl-tRNA(His) + AMP + diphosphate + H(+). The sequence is that of Histidine--tRNA ligase (hisS) from Mycoplasmopsis pulmonis (strain UAB CTIP) (Mycoplasma pulmonis).